Reading from the N-terminus, the 119-residue chain is Ribonuclease P protein component (119 aa).

The protein belongs to the RnpA family. As to quaternary structure, consists of a catalytic RNA component (M1 or rnpB) and a protein subunit.

The catalysed reaction is Endonucleolytic cleavage of RNA, removing 5'-extranucleotides from tRNA precursor.. Its function is as follows. RNaseP catalyzes the removal of the 5'-leader sequence from pre-tRNA to produce the mature 5'-terminus. It can also cleave other RNA substrates such as 4.5S RNA. The protein component plays an auxiliary but essential role in vivo by binding to the 5'-leader sequence and broadening the substrate specificity of the ribozyme. The chain is Ribonuclease P protein component from Coprothermobacter proteolyticus (strain ATCC 35245 / DSM 5265 / OCM 4 / BT).